Here is a 295-residue protein sequence, read N- to C-terminus: MTARIIDGKTISAELRGKLADEVARVVRDHGVTPGLAVVLVGSDPASEVYVRSKHKQTKEAGMASFEHKLPADVPQAELLALIGQLNADPAVHGILVQLPLPKGLDSNAVIAAVDPAKDVDGLNPVNAGRLASGLFALTPCTPLGCIVMAKQVHASLEGMNAIVIGRSNLVGKPLVQLLLNENATVTIAHSRSRDLPALCRQADLVFAAVGKPEMVRGNWIKPGATVIDVGINRTPSPDGGKDKLVGDVAFAEAKEVAGAITPVPGGVGLMTVACLLVNTLRAACAIHGLPKPAV.

NADP(+) is bound by residues 166–168 (GRS), S191, and I232.

Belongs to the tetrahydrofolate dehydrogenase/cyclohydrolase family. In terms of assembly, homodimer.

The enzyme catalyses (6R)-5,10-methylene-5,6,7,8-tetrahydrofolate + NADP(+) = (6R)-5,10-methenyltetrahydrofolate + NADPH. It carries out the reaction (6R)-5,10-methenyltetrahydrofolate + H2O = (6R)-10-formyltetrahydrofolate + H(+). Its pathway is one-carbon metabolism; tetrahydrofolate interconversion. In terms of biological role, catalyzes the oxidation of 5,10-methylenetetrahydrofolate to 5,10-methenyltetrahydrofolate and then the hydrolysis of 5,10-methenyltetrahydrofolate to 10-formyltetrahydrofolate. The protein is Bifunctional protein FolD of Rhodopseudomonas palustris (strain BisB18).